A 215-amino-acid polypeptide reads, in one-letter code: Large ribosomal subunit protein uL3 (215 aa).

At Gln-151 the chain carries N5-methylglutamine.

The protein belongs to the universal ribosomal protein uL3 family. In terms of assembly, part of the 50S ribosomal subunit. Forms a cluster with proteins L14 and L19. Methylated by PrmB.

Its function is as follows. One of the primary rRNA binding proteins, it binds directly near the 3'-end of the 23S rRNA, where it nucleates assembly of the 50S subunit. The chain is Large ribosomal subunit protein uL3 from Rickettsia bellii (strain OSU 85-389).